The following is a 348-amino-acid chain: GMP reductase 2 (348 aa).

NADP(+)-binding positions include 26 to 27 (SR), K78, 129 to 131 (DVA), and 180 to 181 (IG). The K(+) site is built by G181, G183, and C186. Catalysis depends on C186, which acts as the Thioimidate intermediate. T188 serves as the catalytic Proton donor/acceptor. K(+) is bound at residue R189. GMP-binding positions include 219 to 221 (DGG), 242 to 243 (GG), 268 to 270 (GMS), and 286 to 290 (RASEG). NADP(+) is bound by residues M269 and 285 to 286 (YR). An N6-acetyllysine modification is found at K291. Position 314 to 317 (314 to 317 (STCT)) interacts with NADP(+).

It belongs to the IMPDH/GMPR family. GuaC type 1 subfamily. Homotetramer. Highly expressed in heart, skeletal muscle, kidney, brain, liver, prostate, spleen, placenta, testis and ovary. Low expression in colon, thymus and peripheral blood leukocytes.

The enzyme catalyses IMP + NH4(+) + NADP(+) = GMP + NADPH + 2 H(+). In terms of biological role, catalyzes the irreversible NADPH-dependent deamination of GMP to IMP. It functions in the conversion of nucleobase, nucleoside and nucleotide derivatives of G to A nucleotides, and in maintaining the intracellular balance of A and G nucleotides. Plays a role in modulating cellular differentiation. The chain is GMP reductase 2 from Homo sapiens (Human).